We begin with the raw amino-acid sequence, 122 residues long: Large ribosomal subunit protein uL18 (122 aa).

This sequence belongs to the universal ribosomal protein uL18 family. In terms of assembly, part of the 50S ribosomal subunit; part of the 5S rRNA/L5/L18/L25 subcomplex. Contacts the 5S and 23S rRNAs.

In terms of biological role, this is one of the proteins that bind and probably mediate the attachment of the 5S RNA into the large ribosomal subunit, where it forms part of the central protuberance. The protein is Large ribosomal subunit protein uL18 of Dictyoglomus turgidum (strain DSM 6724 / Z-1310).